We begin with the raw amino-acid sequence, 1549 residues long: MPPKTSAAPPQSDESDSDFDDAPVKKPQKKTTKPVNRHKEGSKDPEEELQRAVNEKFDGSDGEDDDSDLFSLQLPSRPDFLTKPNRADRLMIRNVEVDNFKSYFGKASIGPFHKSFTSIIGPNGSGKSNLIDSLLFVFGFRASKIRSAKVSNLIHKSAGRNPDKCTVTIHFQRIVDIPGHYEVVKDSEFTISRTAFQNNSSSYAIDGRPATKNEVEARLRRVDIDIEHNRFLILQGEVEQIAMMKPVKTTKSETGMVEYLEDIIGTNRLEPFVKLFQRRVNRLTCDLSQQRIARDHARNSKVAMENPVRAAIEFLMKENEATTIHMKLEQRRRQRYLDKIAPKQAELDKMKEEMKSIAETLDTNKNEYKQSEEAQKVMIEERSKLDKNFDSLSKELSDLGTEETRRKEALKRHQANISKAEAEKEKEVKKRSNLEAAPEKAERKIAKCQEEVEQLLEIEKTANEEADKNLDEFEKRSEAPKEEQKKIQETWAQKSNEFNKVRGEARIAREDFEDLKKLANSGTDKLIELKKRLESSEESYAKEKDELDKLKPEFDSWNDKLKQLSTELPTLRNTARQKNQDLAKTRDRLETLRQQNSSCSSSNKVIQALMKEKEAGRIKSFHGRLGDLGVIDPKYEGAICTNFGARLNYLIVGKEEDAKNVINFLVANKLPRQTVQPLDKIKCDKRDLAPNPTNPLPAPRLIDLIDCDPVLKPAFYDMVRSAIVGDSTQEAQRMHRMPACRGVTVCTLEGSMIHPSGSFTGGGKTVKGLILTDKNKMAKQVTPEDKAAERDLAEKLGKLRDEADELKGQEHEMDGQLIEARRKVAEMSNRLSIVTSSVQSAAPAIETLKKTIANQEKEAAKVKVDAKTLEDKQKIVEELEKKRDELGEEAAKVKARQAEIQSKLDGIFKELVQCHRDEAKESLQKRQKLEKDIAKETANISNSGRNIAKCDENISRHDKDIEKMKKKCEELMEKAIDDEEVKSKKETVERFEKQIKKLQTKGEEMTKKQSELSAAETKLEGELKKCSEGIKELKESMLADRLKVEDIEKKLAALKVNRIPRFQFLIESSRPEDLEMQIDDKMPVVDENQSPEEVERQKKHMACVMSDAAYALEFEMRQKVLENTESYENVDGEDRVPVELLSDEKINEISSRDAEEMQMKLKVCEQQVEALKAKVDISSIKAYVDKVKQYNEQVIKLTIATEVHRKHNQELQRIKQMRLEEFHSAFEFIGKHLVAVFKMLTDGGDAKLEYIDKDDPFRQGISFMVRPAKKAWKQIQFLSGGEKTLSSLALIFALHMFRPTPFYVMDEIDAALDYRNVSIIAQYVRQKTENAQFIIISLRNNMFELANRLVGIYKVDGCTRNVAIDPLRVCEMAKQITDSLGQATCTLPDEVTQRFNETMSRQNKEMIAQEKQYPNFPSSNEISKAEKIVNVEGRVRKELIQTTRDVTSRPQSKATTSGDGTERPASRSASRPESRINQMKYPAPRLVERSSSQNVRSPRKARNIEADETTPPSKRSNSASTPKRSPMKPLTPSSKKKEKAIVDDDDDME.

Residues 1–78 (MPPKTSAAPP…LFSLQLPSRP (78 aa)) are disordered. Basic residues predominate over residues 26–36 (KPQKKTTKPVN). Positions 37–59 (RHKEGSKDPEEELQRAVNEKFDG) are enriched in basic and acidic residues. 121 to 128 (GPNGSGKS) provides a ligand contact to ATP. The stretch at 326 to 604 (MKLEQRRRQR…QNSSCSSSNK (279 aa)) forms a coiled coil. Composition is skewed to basic and acidic residues over residues 396–407 (LSDLGTEETRRK) and 420–444 (AEAE…AERK). Disordered stretches follow at residues 396-444 (LSDL…AERK) and 460-485 (KTAN…EEQK). The SMC hinge domain maps to 619-734 (KSFHGRLGDL…GDSTQEAQRM (116 aa)). Coiled coils occupy residues 786–1058 (KAAE…KVNR) and 1144–1182 (EKIN…SIKA). The span at 1440-1459 (IQTTRDVTSRPQSKATTSGD) shows a compositional bias: polar residues. The segment at 1440-1549 (IQTTRDVTSR…AIVDDDDDME (110 aa)) is disordered. The segment covering 1460–1474 (GTERPASRSASRPES) has biased composition (basic and acidic residues). Residues 1510–1523 (TPPSKRSNSASTPK) show a composition bias toward polar residues.

The protein belongs to the SMC family. SMC4 subfamily. In terms of assembly, component of the condensin I complex, which contains the mix-1/SMC2 and smc-4/SMC4 heterodimer, and three non SMC subunits that probably regulate the complex: dpy-26, capg-1 and dpy-28. Within the complex, interacts with mix-1, dpy-26, capg-1 and dpy-28. Component of the condensin II complex, which contains the mix-1/SMC2 and smc-4/SMC4 heterodimer, and three non SMC subunits, kle-2, capg-2 and hcp-6 that probably regulate the complex. Within the complex, interacts with mix-1, kle-2, capg-2 and hcp-6. Interacts with smcl-1.

Its subcellular location is the nucleus. It is found in the chromosome. Central component of the condensin I complex, a complex required for conversion of interphase chromatin into mitotic-like condense chromosomes. The condensin I complex introduces positive supercoils into relaxed DNA in the presence of type I topoisomerases. Converts nicked DNA into positive knotted forms in the presence of type II topoisomerases. Also a central component of the condensin II complex, a complex that seems to play a role in prophase chromosome condensation. Both the condensin complex I and II play a role in meiotic and mitotic chromosome segregation. Plays a role in robust cytokinesis upon the presence of chromatin obstructions. The sequence is that of Structural maintenance of chromosomes protein 4 (smc-4) from Caenorhabditis elegans.